Consider the following 1123-residue polypeptide: uncharacterized protein (1123 aa).

Disordered stretches follow at residues 136 to 229, 262 to 471, 483 to 514, 527 to 609, 629 to 769, 782 to 812, 835 to 1005, and 1070 to 1099; these read LGES…PKLT, MLQY…LNQH, LSSI…SPNL, KKIN…QSDD, SILC…NNIS, LKPK…NSSS, ITNN…GESN, and NNNN…NNNI. The segment covering 166-185 has biased composition (gly residues); it reads GGNGGNSGTNGDGDDGGCSL. The span at 190–199 shows a compositional bias: acidic residues; that stretch reads DENDYEDGMV. Over residues 211–223 the composition is skewed to gly residues; it reads SGDGGGGGGGGGD. Residues 262 to 322 are compositionally biased toward low complexity; the sequence is MLQYQQQQQQ…TTTTHSNNSN (61 aa). The span at 329-343 shows a compositional bias: polar residues; the sequence is PLNNSNSNIHFLTNQ. Composition is skewed to low complexity over residues 344–387, 397–464, 489–499, 527–548, and 563–585; these read QNSD…SNLN, STST…SSSS, NNKENNNNNNN, KKIN…NISS, and HQQQ…QQHQ. Polar residues predominate over residues 590–604; it reads SKSSSELQVPSSNYH. Positions 632–646 are enriched in basic and acidic residues; that stretch reads CKDDSKTNTNKDKDN. 2 stretches are compositionally biased toward low complexity: residues 647–707 and 727–769; these read NNSN…INNN and SVSS…NNIS. Residues 790-799 are compositionally biased toward polar residues; the sequence is SSPSIPTTSP. Composition is skewed to low complexity over residues 835–984 and 1070–1098; these read ITNN…NNNI and NNNN…NNNN.

This is an uncharacterized protein from Dictyostelium discoideum (Social amoeba).